The chain runs to 827 residues: Lon protease (827 aa).

The tract at residues 1-27 is disordered; sequence MNDETLREQTTAESEETSPTTPSPEPE. The Lon N-terminal domain maps to 32–225; it reads LPLIPLEGAV…KVLMFYRKQF (194 aa). 385–392 lines the ATP pocket; sequence GPPGVGKT. One can recognise a Lon proteolytic domain in the interval 625–806; that stretch reads IDQPGVAIGL…DEVLSIALLP (182 aa). Catalysis depends on residues S712 and K755.

The protein belongs to the peptidase S16 family. As to quaternary structure, homohexamer. Organized in a ring with a central cavity.

It localises to the cytoplasm. The enzyme catalyses Hydrolysis of proteins in presence of ATP.. Functionally, ATP-dependent serine protease that mediates the selective degradation of mutant and abnormal proteins as well as certain short-lived regulatory proteins. Required for cellular homeostasis and for survival from DNA damage and developmental changes induced by stress. Degrades polypeptides processively to yield small peptide fragments that are 5 to 10 amino acids long. Binds to DNA in a double-stranded, site-specific manner. The polypeptide is Lon protease (Chloroflexus aurantiacus (strain ATCC 29366 / DSM 635 / J-10-fl)).